A 102-amino-acid polypeptide reads, in one-letter code: Large ribosomal subunit protein uL23c (102 aa).

It belongs to the universal ribosomal protein uL23 family. In terms of assembly, part of the 50S ribosomal subunit.

The protein localises to the plastid. The protein resides in the chloroplast. Its function is as follows. Binds to 23S rRNA. The chain is Large ribosomal subunit protein uL23c (rpl23) from Phaeodactylum tricornutum (strain CCAP 1055/1).